Consider the following 999-residue polypeptide: Lysosomal alpha-mannosidase (999 aa).

Residues 1 to 25 are disordered; it reads MVGDARPSGVRAGGCRGAVGSRTSS. A signal peptide spans 1 to 50; sequence MVGDARPSGVRAGGCRGAVGSRTSSRALRPPLPPLSSLFVLFLAAPCAWA. Zn(2+)-binding residues include histidine 73 and aspartate 75. Asparagine 134 is a glycosylation site (N-linked (GlcNAc...) asparagine). Position 197 (aspartate 197) interacts with Zn(2+). The active-site Nucleophile is the aspartate 197. Cysteine 269 and cysteine 274 are oxidised to a cystine. A glycan (N-linked (GlcNAc...) asparagine) is linked at asparagine 369. Histidine 448 serves as a coordination point for Zn(2+). A disulfide bridge connects residues cysteine 495 and cysteine 503. Residue asparagine 499 is glycosylated (N-linked (GlcNAc...) asparagine). Residues 591-621 constitute a propeptide that is removed on maturation; sequence SRDLVIQNEYLRARFDPNTGLLMELENLEQN. N-linked (GlcNAc...) asparagine glycans are attached at residues asparagine 634, asparagine 640, asparagine 681, asparagine 755, and asparagine 919.

This sequence belongs to the glycosyl hydrolase 38 family. In terms of assembly, homodimer. Zn(2+) serves as cofactor. Post-translationally, processed into 5 peptides of 35/38 kDa (A), 11/13 kDa (B) and 22 kDa (C), 38 kDa (D) and 13/15 kDa (E). The A, B and C peptides are disulfide-linked into a 67 kDa complex. In terms of processing, heavily glycosylated. Some sugar chains are of the high-mannose type.

The protein localises to the lysosome. It catalyses the reaction Hydrolysis of terminal, non-reducing alpha-D-mannose residues in alpha-D-mannosides.. Functionally, necessary for the catabolism of N-linked carbohydrates released during glycoprotein turnover. The protein is Lysosomal alpha-mannosidase (MAN2B1) of Bos taurus (Bovine).